Consider the following 74-residue polypeptide: Cell division protein ZapB (74 aa).

A coiled-coil region spans residues 2–74 (TLDLLEQLES…LVGKIEETES (73 aa)).

It belongs to the ZapB family. As to quaternary structure, homodimer. The ends of the coiled-coil dimer bind to each other, forming polymers. Interacts with FtsZ.

The protein localises to the cytoplasm. Its function is as follows. Non-essential, abundant cell division factor that is required for proper Z-ring formation. It is recruited early to the divisome by direct interaction with FtsZ, stimulating Z-ring assembly and thereby promoting cell division earlier in the cell cycle. Its recruitment to the Z-ring requires functional FtsA or ZipA. The polypeptide is Cell division protein ZapB (Psychromonas ingrahamii (strain DSM 17664 / CCUG 51855 / 37)).